Here is a 1671-residue protein sequence, read N- to C-terminus: DNA polymerase (1671 aa).

The interval 135-326 (LKMLAFDIET…KVTYELGKEF (192 aa)) is 3'-5' exonuclease. In terms of domain architecture, DOD-type homing endonuclease 1 spans 524–665 (LAGILLAEGT…VSKLLSQLGI (142 aa)). Cysteine 788 and cysteine 802 are oxidised to a cystine. The region spanning 1132 to 1265 (LLGYYVSEGY…LVLLLNSVGV (134 aa)) is the DOD-type homing endonuclease 2 domain. A disulfide bridge links cysteine 1403 with cysteine 1406.

The protein belongs to the DNA polymerase type-B family. In terms of processing, undergoes a protein self splicing that involves a post-translational excision of the intervening region (intein) followed by peptide ligation.

The enzyme catalyses DNA(n) + a 2'-deoxyribonucleoside 5'-triphosphate = DNA(n+1) + diphosphate. In terms of biological role, has high processivity, a high polymerization rate and high fidelity. In addition to polymerase activity, also exhibits 3' to 5' exonuclease activity. Functionally, intein encoded endonucleases are thought to mediate intein mobility by site-specific recombination initiated by endonuclease cleavage at the 'homing site' in genes that lack the intein. Upon expression in E.coli PI-PkoI recognizes the minimal sequence 5'-GATTTTAGATCCCTGTACC-3' and cuts after T-10. PI-PkoII recognizes the minimal sequence 5'-CAGCTACTACGGTTAC-3' and cuts after C-10. Given the high intracellular K(+) content (&gt;0.5 M), PI-PkoII is probably more active than PI-PkoI in vivo. This is DNA polymerase (pol) from Thermococcus kodakarensis (strain ATCC BAA-918 / JCM 12380 / KOD1) (Pyrococcus kodakaraensis (strain KOD1)).